Consider the following 365-residue polypeptide: Embryonic developmental protein tofu-6 (365 aa).

Residues 13–90 form the RRM domain; that stretch reads AGFHIRNVPK…YSLKVSDHKN (78 aa).

In terms of biological role, required maternally for early embryonic cell divisions. May have a role in DNA replication. This chain is Embryonic developmental protein tofu-6, found in Caenorhabditis briggsae.